We begin with the raw amino-acid sequence, 159 residues long: NAD(P)H-quinone oxidoreductase subunit J, chloroplastic (159 aa).

The protein belongs to the complex I 30 kDa subunit family. In terms of assembly, NDH is composed of at least 16 different subunits, 5 of which are encoded in the nucleus.

It localises to the plastid. Its subcellular location is the chloroplast thylakoid membrane. The enzyme catalyses a plastoquinone + NADH + (n+1) H(+)(in) = a plastoquinol + NAD(+) + n H(+)(out). The catalysed reaction is a plastoquinone + NADPH + (n+1) H(+)(in) = a plastoquinol + NADP(+) + n H(+)(out). Functionally, NDH shuttles electrons from NAD(P)H:plastoquinone, via FMN and iron-sulfur (Fe-S) centers, to quinones in the photosynthetic chain and possibly in a chloroplast respiratory chain. The immediate electron acceptor for the enzyme in this species is believed to be plastoquinone. Couples the redox reaction to proton translocation, and thus conserves the redox energy in a proton gradient. This Agrostis stolonifera (Creeping bentgrass) protein is NAD(P)H-quinone oxidoreductase subunit J, chloroplastic.